Reading from the N-terminus, the 412-residue chain is CCA-adding enzyme (412 aa).

Positions 41 and 44 each coordinate ATP. CTP-binding residues include serine 41 and lysine 44. Positions 53, 55, and 106 each coordinate Mg(2+). ATP is bound by residues histidine 129, lysine 149, and tyrosine 158. Residues histidine 129, lysine 149, and tyrosine 158 each coordinate CTP.

It belongs to the tRNA nucleotidyltransferase/poly(A) polymerase family. Archaeal CCA-adding enzyme subfamily. Homodimer. Mg(2+) is required as a cofactor.

It catalyses the reaction a tRNA precursor + 2 CTP + ATP = a tRNA with a 3' CCA end + 3 diphosphate. The enzyme catalyses a tRNA with a 3' CCA end + 2 CTP + ATP = a tRNA with a 3' CCACCA end + 3 diphosphate. Its function is as follows. Catalyzes the addition and repair of the essential 3'-terminal CCA sequence in tRNAs without using a nucleic acid template. Adds these three nucleotides in the order of C, C, and A to the tRNA nucleotide-73, using CTP and ATP as substrates and producing inorganic pyrophosphate. tRNA 3'-terminal CCA addition is required both for tRNA processing and repair. Also involved in tRNA surveillance by mediating tandem CCA addition to generate a CCACCA at the 3' terminus of unstable tRNAs. While stable tRNAs receive only 3'-terminal CCA, unstable tRNAs are marked with CCACCA and rapidly degraded. The protein is CCA-adding enzyme of Saccharolobus solfataricus (strain ATCC 35092 / DSM 1617 / JCM 11322 / P2) (Sulfolobus solfataricus).